Consider the following 30-residue polypeptide: Trypsin inhibitor 3 (30 aa).

3 cysteine pairs are disulfide-bonded: C4–C21, C11–C23, and C17–C29.

This sequence belongs to the protease inhibitor I7 (squash-type serine protease inhibitor) family.

The protein localises to the secreted. Inhibits trypsin. The sequence is that of Trypsin inhibitor 3 from Momordica charantia (Bitter gourd).